We begin with the raw amino-acid sequence, 280 residues long: Putative aquaporin-10 (280 aa).

Topologically, residues Met-1–Tyr-8 are cytoplasmic. Residues Tyr-9 to Ala-29 form a helical membrane-spanning segment. Topologically, residues Arg-30 to Gly-64 are extracellular. Residues Ile-65–Ala-85 traverse the membrane as a helical segment. Over Gly-86 to Phe-114 the chain is Cytoplasmic. The chain crosses the membrane as a helical span at residues Leu-115–Ile-135. The Extracellular segment spans residues Trp-136 to Gly-164. A helical transmembrane segment spans residues Ile-165 to Leu-185. Residues Ala-186–Leu-193 lie on the Cytoplasmic side of the membrane. A helical transmembrane segment spans residues Ile-194–Leu-214. Residues Asn-215–Ser-233 are Extracellular-facing. Residues Phe-234–Gly-254 form a helical membrane-spanning segment. Residues Gln-255–Asp-280 are Cytoplasmic-facing. Residues Lys-256–Asp-280 form a disordered region. Over residues Ser-262–Asp-280 the composition is skewed to basic and acidic residues.

Belongs to the MIP/aquaporin (TC 1.A.8) family.

The protein localises to the membrane. The protein is Putative aquaporin-10 (aqp-10) of Caenorhabditis elegans.